The following is a 108-amino-acid chain: FK506-binding protein 1 (108 aa).

Residues 20 to 108 form the PPIase FKBP-type domain; the sequence is GDNVTIHYVG…KFEVELLKVN (89 aa).

This sequence belongs to the FKBP-type PPIase family. FKBP1 subfamily.

It localises to the cytoplasm. It carries out the reaction [protein]-peptidylproline (omega=180) = [protein]-peptidylproline (omega=0). Its activity is regulated as follows. Inhibited by both FK506 and rapamycin. PPIases accelerate the folding of proteins. It catalyzes the cis-trans isomerization of proline imidic peptide bonds in oligopeptides. The protein is FK506-binding protein 1 (FRR1) of Cryptococcus neoformans var. grubii serotype A (strain H99 / ATCC 208821 / CBS 10515 / FGSC 9487) (Filobasidiella neoformans var. grubii).